A 396-amino-acid polypeptide reads, in one-letter code: S-adenosylmethionine synthase 2 (396 aa).

Glu-13 lines the Mg(2+) pocket. An ATP-binding site is contributed by His-19. Glu-47 contributes to the K(+) binding site. L-methionine-binding residues include Glu-60 and Gln-103. Residues 171–173 (DGK), 239–242 (SGRF), Asp-250, 256–257 (RK), Ala-273, Lys-277, and Lys-281 contribute to the ATP site. L-methionine is bound at residue Asp-250. Residue Lys-281 coordinates L-methionine.

It belongs to the AdoMet synthase family. As to quaternary structure, homotetramer. The cofactor is Mn(2+). Mg(2+) is required as a cofactor. Co(2+) serves as cofactor. It depends on K(+) as a cofactor. As to expression, expressed in roots, stems and leaves (at protein level).

It is found in the cytoplasm. It catalyses the reaction L-methionine + ATP + H2O = S-adenosyl-L-methionine + phosphate + diphosphate. The protein operates within amino-acid biosynthesis; S-adenosyl-L-methionine biosynthesis; S-adenosyl-L-methionine from L-methionine: step 1/1. In terms of biological role, catalyzes the formation of S-adenosylmethionine from methionine and ATP. The reaction comprises two steps that are both catalyzed by the same enzyme: formation of S-adenosylmethionine (AdoMet) and triphosphate, and subsequent hydrolysis of the triphosphate. May be involved in the synthesis of betain in response to abiotic stress such as high salinity. The polypeptide is S-adenosylmethionine synthase 2 (SAMS2) (Atriplex nummularia (Old man saltbush)).